Reading from the N-terminus, the 231-residue chain is Ion-translocating oxidoreductase complex subunit E (231 aa).

6 consecutive transmembrane segments (helical) span residues 18 to 38 (ALVQ…ATNA), 39 to 59 (LGLG…ISTL), 63 to 83 (TPAE…VSAV), 86 to 106 (LINA…PLIV), 125 to 145 (ALSA…MCVL), and 182 to 202 (PFLL…MLAG).

The protein belongs to the NqrDE/RnfAE family. The complex is composed of six subunits: RsxA, RsxB, RsxC, RsxD, RsxE and RsxG.

The protein localises to the cell inner membrane. Its function is as follows. Part of a membrane-bound complex that couples electron transfer with translocation of ions across the membrane. Required to maintain the reduced state of SoxR. This is Ion-translocating oxidoreductase complex subunit E from Escherichia coli (strain SMS-3-5 / SECEC).